The chain runs to 245 residues: 1-(5-phosphoribosyl)-5-[(5-phosphoribosylamino)methylideneamino] imidazole-4-carboxamide isomerase (245 aa).

D8 serves as the catalytic Proton acceptor. D130 serves as the catalytic Proton donor.

Belongs to the HisA/HisF family.

It is found in the cytoplasm. The catalysed reaction is 1-(5-phospho-beta-D-ribosyl)-5-[(5-phospho-beta-D-ribosylamino)methylideneamino]imidazole-4-carboxamide = 5-[(5-phospho-1-deoxy-D-ribulos-1-ylimino)methylamino]-1-(5-phospho-beta-D-ribosyl)imidazole-4-carboxamide. The protein operates within amino-acid biosynthesis; L-histidine biosynthesis; L-histidine from 5-phospho-alpha-D-ribose 1-diphosphate: step 4/9. In Pseudomonas putida (strain ATCC 47054 / DSM 6125 / CFBP 8728 / NCIMB 11950 / KT2440), this protein is 1-(5-phosphoribosyl)-5-[(5-phosphoribosylamino)methylideneamino] imidazole-4-carboxamide isomerase.